The following is an 82-amino-acid chain: DNA gyrase inhibitor YacG (82 aa).

Residues cysteine 9, cysteine 12, cysteine 27, and cysteine 31 each contribute to the Zn(2+) site. Positions 44-82 are disordered; that stretch reads IGLPHEGDPGDAPVEYLDDRDLTQPSPERQNESFHRYSE. Over residues 72–82 the composition is skewed to basic and acidic residues; it reads RQNESFHRYSE.

The protein belongs to the DNA gyrase inhibitor YacG family. In terms of assembly, interacts with GyrB. It depends on Zn(2+) as a cofactor.

Its function is as follows. Inhibits all the catalytic activities of DNA gyrase by preventing its interaction with DNA. Acts by binding directly to the C-terminal domain of GyrB, which probably disrupts DNA binding by the gyrase. The polypeptide is DNA gyrase inhibitor YacG (Rhodopirellula baltica (strain DSM 10527 / NCIMB 13988 / SH1)).